Reading from the N-terminus, the 732-residue chain is Ets DNA-binding protein pokkuri (732 aa).

A PNT domain is found at 33-117; that stretch reads SSQLAELKTQ…NVLQMLIIES (85 aa). The interval 133–295 is disordered; sequence SRYPLSPHSH…PPGTPILKDI (163 aa). Residues 141–157 are compositionally biased toward pro residues; that stretch reads SHPPTPTWPPLNAPPEN. Positions 176 to 193 are enriched in polar residues; sequence NSVTLSPPPSVDSQASSP. Low complexity predominate over residues 205 to 240; the sequence is GAAPGSAGGSAPAAGGATNTSNPTSSSASSTGSNGS. Residues 396–479 constitute a DNA-binding region (ETS); that stretch reads RLLWDFLQQL…QGERHCYQFL (84 aa). Disordered stretches follow at residues 496-548, 590-647, and 674-732; these read QSTP…NGPM, GPPP…TATS, and VAAS…HMQQ. Positions 506 to 539 are enriched in low complexity; it reads SPSMPQGSSQAPGSPAGQNWNPQQQSQQQQQSPQ. Serine 543 is modified (phosphoserine). Polar residues predominate over residues 637–647; that stretch reads LSVSSKSTATS. Serine 677, serine 682, and serine 696 each carry phosphoserine. The segment covering 690 to 709 has biased composition (polar residues); it reads AGASNASSSPRPMDQASEQA.

The protein belongs to the ETS family. Post-translationally, phosphorylated in response to MAPK signaling. May be phosphorylated by rl. Expressed in R7 and cone cells of the eye.

The protein resides in the nucleus. Functionally, ets-related protein that functions as a negative regulator of photoreceptor development acting antagonistically to pnt and the proneural signal mediated by RAS. It acts upstream of SINA to inhibit R7 development. This chain is Ets DNA-binding protein pokkuri (aop), found in Drosophila melanogaster (Fruit fly).